The following is a 535-amino-acid chain: Light-independent protochlorophyllide reductase subunit B (535 aa).

[4Fe-4S] cluster is bound at residue D36. The active-site Proton donor is D292. 428–429 lines the substrate pocket; that stretch reads GL.

It belongs to the ChlB/BchB/BchZ family. As to quaternary structure, protochlorophyllide reductase is composed of three subunits; BchL, BchN and BchB. Forms a heterotetramer of two BchB and two BchN subunits. It depends on [4Fe-4S] cluster as a cofactor.

The catalysed reaction is chlorophyllide a + oxidized 2[4Fe-4S]-[ferredoxin] + 2 ADP + 2 phosphate = protochlorophyllide a + reduced 2[4Fe-4S]-[ferredoxin] + 2 ATP + 2 H2O. It functions in the pathway porphyrin-containing compound metabolism; bacteriochlorophyll biosynthesis (light-independent). Its function is as follows. Component of the dark-operative protochlorophyllide reductase (DPOR) that uses Mg-ATP and reduced ferredoxin to reduce ring D of protochlorophyllide (Pchlide) to form chlorophyllide a (Chlide). This reaction is light-independent. The NB-protein (BchN-BchB) is the catalytic component of the complex. The polypeptide is Light-independent protochlorophyllide reductase subunit B (Pelodictyon phaeoclathratiforme (strain DSM 5477 / BU-1)).